Reading from the N-terminus, the 173-residue chain is Crossover junction endodeoxyribonuclease RuvC (173 aa).

Residues aspartate 8, glutamate 67, and aspartate 139 contribute to the active site. Residues aspartate 8, glutamate 67, and aspartate 139 each contribute to the Mg(2+) site.

The protein belongs to the RuvC family. In terms of assembly, homodimer which binds Holliday junction (HJ) DNA. The HJ becomes 2-fold symmetrical on binding to RuvC with unstacked arms; it has a different conformation from HJ DNA in complex with RuvA. In the full resolvosome a probable DNA-RuvA(4)-RuvB(12)-RuvC(2) complex forms which resolves the HJ. The cofactor is Mg(2+).

The protein localises to the cytoplasm. The catalysed reaction is Endonucleolytic cleavage at a junction such as a reciprocal single-stranded crossover between two homologous DNA duplexes (Holliday junction).. Functionally, the RuvA-RuvB-RuvC complex processes Holliday junction (HJ) DNA during genetic recombination and DNA repair. Endonuclease that resolves HJ intermediates. Cleaves cruciform DNA by making single-stranded nicks across the HJ at symmetrical positions within the homologous arms, yielding a 5'-phosphate and a 3'-hydroxyl group; requires a central core of homology in the junction. The consensus cleavage sequence is 5'-(A/T)TT(C/G)-3'. Cleavage occurs on the 3'-side of the TT dinucleotide at the point of strand exchange. HJ branch migration catalyzed by RuvA-RuvB allows RuvC to scan DNA until it finds its consensus sequence, where it cleaves and resolves the cruciform DNA. This is Crossover junction endodeoxyribonuclease RuvC from Shewanella putrefaciens (strain CN-32 / ATCC BAA-453).